We begin with the raw amino-acid sequence, 538 residues long: Probable folate-biopterin transporter 9, chloroplastic (538 aa).

The transit peptide at 1 to 57 (MNNPLLSISNPVKFFKPPIPYRISLNTTINKKQKHQSKTLVVKSNKRSTTSLTSSVS) directs the protein to the chloroplast. 12 consecutive transmembrane segments (helical) span residues 85–105 (VLLC…WLAL), 129–149 (LPMV…IGGA), 152–172 (VPYI…LAIF), 178–198 (VLPS…ITEV), 220–240 (ALMA…YCLL), 246–266 (ILFL…LSSK), 309–329 (LIWI…VFCY), 339–359 (SVIG…TVVY), 370–390 (ALIH…YILV), 395–415 (LAFG…AEIL), 447–467 (LCLS…MIGI), and 479–499 (ILIQ…VPML).

Belongs to the major facilitator superfamily. Folate-biopterin transporter (TC 2.A.71) family.

The protein resides in the plastid. The protein localises to the chloroplast membrane. Its function is as follows. Could mediate folate transport. In Arabidopsis thaliana (Mouse-ear cress), this protein is Probable folate-biopterin transporter 9, chloroplastic.